The following is a 123-amino-acid chain: Large-conductance mechanosensitive channel (123 aa).

A run of 2 helical transmembrane segments spans residues 14-34 (VIDMAVGIIVGAAFTSIVKSL) and 67-87 (GSFLNAVINFLIISFVVFLMV).

This sequence belongs to the MscL family. As to quaternary structure, homopentamer.

Its subcellular location is the cell membrane. Its function is as follows. Channel that opens in response to stretch forces in the membrane lipid bilayer. May participate in the regulation of osmotic pressure changes within the cell. In Limosilactobacillus reuteri (strain DSM 20016) (Lactobacillus reuteri), this protein is Large-conductance mechanosensitive channel.